The sequence spans 571 residues: Septation ring formation regulator EzrA (571 aa).

Residues 1–3 (MYY) are Extracellular-facing. The helical transmembrane segment at 4-22 (MLIGFIIVVIAIISAGYIL) threads the bilayer. Residues 23 to 571 (KRKHYQRINE…ESKVSVDDIE (549 aa)) lie on the Cytoplasmic side of the membrane. Coiled-coil stretches lie at residues 169-214 (VETK…AQME), 249-298 (AQME…DTLE), 326-374 (DALA…ASGE), 400-438 (KFAE…RERL), and 474-529 (TQDW…ENHF).

This sequence belongs to the EzrA family.

It localises to the cell membrane. Functionally, negative regulator of FtsZ ring formation; modulates the frequency and position of FtsZ ring formation. Inhibits FtsZ ring formation at polar sites. Interacts either with FtsZ or with one of its binding partners to promote depolymerization. The polypeptide is Septation ring formation regulator EzrA (Listeria welshimeri serovar 6b (strain ATCC 35897 / DSM 20650 / CCUG 15529 / CIP 8149 / NCTC 11857 / SLCC 5334 / V8)).